A 553-amino-acid chain; its full sequence is Urocanate hydratase (553 aa).

NAD(+) contacts are provided by residues 45-46 (GG), Gln123, 169-171 (GMG), Asp189, Arg194, 235-236 (NA), 256-260 (QTSAH), 266-267 (YV), Tyr315, and Gly485.

Belongs to the urocanase family. NAD(+) is required as a cofactor.

It localises to the cytoplasm. The catalysed reaction is 4-imidazolone-5-propanoate = trans-urocanate + H2O. Its pathway is amino-acid degradation; L-histidine degradation into L-glutamate; N-formimidoyl-L-glutamate from L-histidine: step 2/3. Its function is as follows. Catalyzes the conversion of urocanate to 4-imidazolone-5-propionate. The protein is Urocanate hydratase of Staphylococcus aureus (strain COL).